The primary structure comprises 532 residues: Putative F-box/LRR-repeat protein At3g42770 (532 aa).

Residues 1–46 (MNCLPDELLVQILSFLPTKEATSTSLLSKRWRTLFTLSPNLDFDNS) enclose the F-box domain. 3 LRR repeats span residues 113 to 135 (VSEL…IFTS), 279 to 305 (IRNV…EIPM), and 398 to 420 (MNDL…SPKL).

The sequence is that of Putative F-box/LRR-repeat protein At3g42770 from Arabidopsis thaliana (Mouse-ear cress).